Here is a 654-residue protein sequence, read N- to C-terminus: Protein THALLO (654 aa).

Over residues 1–16 the composition is skewed to basic residues; that stretch reads MGKKGGTLKRSSKSTK. 3 disordered regions span residues 1 to 23, 35 to 145, and 164 to 212; these read MGKK…DIVE, KQRD…SDDE, and SITA…KDTH. The Nuclear localization signal 1 motif lies at 2–9; the sequence is GKKGGTLK. Acidic residues-rich tracts occupy residues 44–56, 64–82, and 103–114; these read VNDD…EDDV, GVDD…EEAE, and GDDEMADDDKDK. Positions 140–160 form a coiled coil; sequence LSSDDEDIKAEEEEVIRLRAE. Acidic residues predominate over residues 171-181; sequence GLDDDSEEDSD. A compositionally biased stretch (basic and acidic residues) spans 182-212; the sequence is RELTMEEISDKGKQATKSITDKKEKGDKDTH. A coiled-coil region spans residues 243 to 263; the sequence is LSELNDAVEELESKINPVMNK. Disordered regions lie at residues 362-397, 470-492, and 509-654; these read SDSV…HQND, VSTK…DDIG, and KSSE…SIRM. Basic and acidic residues predominate over residues 364 to 387; that stretch reads SVDRITQDTAKPMKIDNAREEKKK. Acidic residues predominate over residues 524–546; the sequence is SDDEDDNDGDNNDMVDNDGESED. Basic residues predominate over residues 552 to 561; it reads VKQKQQAKRA. Residues 588-599 are compositionally biased toward polar residues; that stretch reads SNQMVSNRGLTR. Positions 608–615 match the Nuclear localization signal 2 motif; that stretch reads PRKKYRKN. The span at 645-654 shows a compositional bias: polar residues; the sequence is NPNTSRSIRM.

Belongs to the SAS10 family. In terms of assembly, interacts with NUCL1, NUCL2, JMJ14, NOF1 and MPP10 in the nucleus. Mainly present in tissues undergoing rapid cellular growth and differentiation. Mostly expressed in shoots and flowers, and, to a lower extent, in leaves, siliques, roots and seedlings.

It is found in the nucleus. The protein resides in the nucleolus. Essential protein during embryogenesis. Involved both in gene transcription regulation and in processing events critical for proper rRNA biogenesis and nucleolar organization during reproduction; contributes to pre-rRNA processing at the 5' external transcribed spacer. Binds RNA. This is Protein THALLO from Arabidopsis thaliana (Mouse-ear cress).